The chain runs to 127 residues: Fluoride-specific ion channel FluC (127 aa).

The next 4 membrane-spanning stretches (helical) occupy residues 4–24 (LLLA…LLSM), 35–55 (LGTL…FAWF), 71–91 (TGFC…VFLL), and 103–123 (VFVN…LFSA). Residues G75 and T78 each contribute to the Na(+) site.

This sequence belongs to the fluoride channel Fluc/FEX (TC 1.A.43) family.

The protein localises to the cell inner membrane. The catalysed reaction is fluoride(in) = fluoride(out). Its activity is regulated as follows. Na(+) is not transported, but it plays an essential structural role and its presence is essential for fluoride channel function. Its function is as follows. Fluoride-specific ion channel. Important for reducing fluoride concentration in the cell, thus reducing its toxicity. The protein is Fluoride-specific ion channel FluC of Escherichia coli O81 (strain ED1a).